Here is a 148-residue protein sequence, read N- to C-terminus: Large ribosomal subunit protein uL22c (148 aa).

Belongs to the universal ribosomal protein uL22 family. Part of the 50S ribosomal subunit.

It is found in the plastid. The protein resides in the chloroplast. This protein binds specifically to 23S rRNA. Its function is as follows. The globular domain of the protein is located near the polypeptide exit tunnel on the outside of the subunit, while an extended beta-hairpin is found that lines the wall of the exit tunnel in the center of the 70S ribosome. The polypeptide is Large ribosomal subunit protein uL22c (rpl22) (Zea mays (Maize)).